Reading from the N-terminus, the 553-residue chain is MYRVKSESDCDMIHQEQMDSPVADDGSSGGSPHRGGGPPLKKGPWTSAEDAILVDYVKKHGEGNWNAVQKNTGLFRCGKSCRLRWANHLRPNLKKGAFTAEEERLIIQLHSKMGNKWARMAAHLPGRTDNEIKNYWNTRIKRCQRAGLPIYPTSVCNQSSNEDQQCSSDFDCGENLSNDLLNANGLYLPDFTCDNFIANSEALPYAPHLSAVSISNLLGQSFASKSCSFMDQVNQTGMLKQSDGVLPGLSDTINGVISSVDQFSNDSEKLKQAVGFDYLHEANSTSKIIAPFGGALNGSHAFLNGNFSASRPTSGPLKMELPSLQDTESDPNSWLKYTVAPALQPTELVDPYLQSPAATPSVKSECASPRNSGLLEELIHEAQTLRSGKNQQTSVISSSSSVGTPCNTTVLSPEFDMCQEYWEEQHPGPFLNDCAPFSGNSFTESTPPVSAASPDIFQLSKVSPAQSTSMGSGEQVMGPKYEPGDTSPHPENFRPDALFSGNTADPSVFNNAIAMLLGNDLSIDCRPVLGDGIMFNSSSWSNMPHACEMSEFK.

A compositionally biased stretch (basic and acidic residues) spans M1 to Q17. Residues M1–W45 are disordered. The span at S27–P38 shows a compositional bias: gly residues. HTH myb-type domains lie at G37–L89 and R90–Q144. DNA-binding regions (H-T-H motif) lie at residues W65–L89 and W117–I140. Positions P464–H489 are disordered.

As to quaternary structure, interacts with MYBS1. In terms of tissue distribution, expressed in aleurone cells, inflorescence shoot apical region, stamen primordia, and tapetum cells of the anther. Expressed at low level in roots and vegetative shoots.

It is found in the nucleus. Functionally, transcriptional activator of gibberellin-dependent alpha-amylase expression in aleurone cells. Involved in pollen and floral organs development. May bind to the 5'-TAACAAA-3' box of alpha-amylase promoter. Required for anther development. Functions in parallel with UDT1 to regulate early anther development. Functions upstream of the transcription factor TDR and may positively regulate its transcription. Required for pollen development. Probably required for controlling tapetal cell size and promoting tapetal programmed cell death (PCD) during anther development. Required for exine and Ubisch body formation in anthers. Interacts with the DNA specific motifs of giberrellin-up-regulated genes of anthers and regulates their expression. Positively regulates the expression of the laurate hydroxylase CYP703A3, known to be essential for the development of pollen exine and anther epicuticular layer. Functions with MYBS1 to integrate diverse nutrient starvation and gibberellin (GA) signaling pathways during germination of grains. Sugar, nitrogen and phosphate starvation signals converge and interconnect with GA to promote the co-nuclear import of GAMYB and MYBS1, resulting in the expression of a large set of GA-inducible hydrolases, transporters and regulators that are essential for mobilization of nutrient reserves in the endosperm to support seedling growth. The sequence is that of Transcription factor GAMYB from Oryza sativa subsp. japonica (Rice).